The following is a 613-amino-acid chain: TANK-binding kinase 1-binding protein 1 (613 aa).

A homodimerization region spans residues 1–280 (MESMFEDDIS…QDLASNQSEC (280 aa)). A coiled-coil region spans residues 48–162 (YGDIKERLGG…ALVETHLRQI (115 aa)). The residue at position 184 (S184) is a Phosphoserine. Residues 218–277 (TSVSVSELERRRLEEALEAAQGEARGAQLREEQLQAECERLQGELKQLQETRAQDLASNQ) adopt a coiled-coil conformation. The segment at 281 to 330 (GMAWVKRVGDDQVNLALAYTELTEELGRLRELSSLQGRILRTLLQEQARN) is interaction with TBK1 and IKBKE. Positions 328–457 (ARNAGQRHSP…HHAKAGFQGR (130 aa)) are disordered. Residues 346–361 (PACPSPSPPARPPPCA) are compositionally biased toward pro residues. The segment covering 362–372 (PCQSPAAQRRS) has biased composition (low complexity). Residues S365, S372, S379, S385, S400, and S415 each carry the phosphoserine modification. The span at 389–406 (PSCPSPVPQRRSPVPPSC) shows a compositional bias: pro residues. Pro residues predominate over residues 416–433 (PVPPSCPAPQPRPPPPPG). Phosphoserine is present on residues S502 and S532. Residues 581–607 (IRSCPLCQLGFPVGYPDDALIKHIDSH) form a UBZ1-type zinc finger. Zn(2+) contacts are provided by C584, C587, H603, and H607.

As to quaternary structure, homodimer. May form a heterodimer with NAP1. Interacts with TKB1 and IKBKE. Weakly interacts with DDX3X.

Its function is as follows. Adapter protein which constitutively binds TBK1 and IKBKE playing a role in antiviral innate immunity. Essential for the efficient induction of IRF-dependent transcription following infection with Sendai virus. The polypeptide is TANK-binding kinase 1-binding protein 1 (Rattus norvegicus (Rat)).